Reading from the N-terminus, the 313-residue chain is D-alanine--D-alanine ligase (313 aa).

Residues 108–308 (KLVWQQLGIP…YQELVVKVLA (201 aa)) enclose the ATP-grasp domain. 138-193 (VAKLGLPLFVKPASEGSSVAVIKVKTADALVPALEEAVKFDKIVVVEKSIEGGGEY) contacts ATP. Residues Asp-262, Glu-275, and Asn-277 each contribute to the Mg(2+) site.

It belongs to the D-alanine--D-alanine ligase family. Mg(2+) serves as cofactor. It depends on Mn(2+) as a cofactor.

The protein localises to the cytoplasm. The catalysed reaction is 2 D-alanine + ATP = D-alanyl-D-alanine + ADP + phosphate + H(+). It functions in the pathway cell wall biogenesis; peptidoglycan biosynthesis. Functionally, cell wall formation. The sequence is that of D-alanine--D-alanine ligase from Paraburkholderia phymatum (strain DSM 17167 / CIP 108236 / LMG 21445 / STM815) (Burkholderia phymatum).